The chain runs to 141 residues: Nucleoside diphosphate kinase (141 aa).

ATP-binding residues include lysine 11, phenylalanine 59, arginine 87, threonine 93, arginine 104, and asparagine 114. The Pros-phosphohistidine intermediate role is filled by histidine 117.

This sequence belongs to the NDK family. Homotetramer. It depends on Mg(2+) as a cofactor.

It localises to the cytoplasm. It carries out the reaction a 2'-deoxyribonucleoside 5'-diphosphate + ATP = a 2'-deoxyribonucleoside 5'-triphosphate + ADP. The enzyme catalyses a ribonucleoside 5'-diphosphate + ATP = a ribonucleoside 5'-triphosphate + ADP. In terms of biological role, major role in the synthesis of nucleoside triphosphates other than ATP. The ATP gamma phosphate is transferred to the NDP beta phosphate via a ping-pong mechanism, using a phosphorylated active-site intermediate. The chain is Nucleoside diphosphate kinase from Proteus mirabilis (strain HI4320).